Consider the following 252-residue polypeptide: Diphthine synthase (252 aa).

Residues leucine 9, aspartate 85, valine 88, 113–114 (SI), leucine 165, alanine 202, and histidine 227 contribute to the S-adenosyl-L-methionine site.

Belongs to the diphthine synthase family. In terms of assembly, homodimer.

It carries out the reaction 2-[(3S)-amino-3-carboxypropyl]-L-histidyl-[translation elongation factor 2] + 3 S-adenosyl-L-methionine = diphthine-[translation elongation factor 2] + 3 S-adenosyl-L-homocysteine + 3 H(+). It participates in protein modification; peptidyl-diphthamide biosynthesis. S-adenosyl-L-methionine-dependent methyltransferase that catalyzes the trimethylation of the amino group of the modified target histidine residue in translation elongation factor 2 (EF-2), to form an intermediate called diphthine. The three successive methylation reactions represent the second step of diphthamide biosynthesis. This is Diphthine synthase from Methanospirillum hungatei JF-1 (strain ATCC 27890 / DSM 864 / NBRC 100397 / JF-1).